The chain runs to 339 residues: Cullin-associated NEDD8-dissociated protein 1, N-terminal part (339 aa).

HEAT repeat units lie at residues 5–42 and 50–87; these read HTIQQNLNGLLSKLNDPDPDMRYMSLNDLYGILSNPCS and ASATRLAEGLLKALDDQHGDVQNQALKCLGPLVARLPL.

In terms of assembly, interacts with candA-C. Interacts with unneddylated cullins culA and culD; interaction occurs only when complexed with candA-C.

The protein localises to the nucleus. Its function is as follows. Assembly factor of SCF (SKP1-CUL1-F-box protein) E3 ubiquitin ligase complexes that promotes the exchange of the substrate-recognition F-box subunit in SCF complexes, thereby playing a key role in the cellular repertoire of SCF complexes. Acts as a F-box protein exchange factor when interacting with candA-C. The protein is Cullin-associated NEDD8-dissociated protein 1, N-terminal part (candA-N) of Emericella nidulans (strain FGSC A4 / ATCC 38163 / CBS 112.46 / NRRL 194 / M139) (Aspergillus nidulans).